The sequence spans 287 residues: Ribosomal RNA small subunit methyltransferase I (287 aa).

Belongs to the methyltransferase superfamily. RsmI family.

The protein resides in the cytoplasm. The catalysed reaction is cytidine(1402) in 16S rRNA + S-adenosyl-L-methionine = 2'-O-methylcytidine(1402) in 16S rRNA + S-adenosyl-L-homocysteine + H(+). In terms of biological role, catalyzes the 2'-O-methylation of the ribose of cytidine 1402 (C1402) in 16S rRNA. The chain is Ribosomal RNA small subunit methyltransferase I from Helicobacter pylori (strain ATCC 700392 / 26695) (Campylobacter pylori).